Here is a 320-residue protein sequence, read N- to C-terminus: MGSSSRVGDENSLLDLTEKVAVVTGANSGIGLYILFHVARAGAKVYLGARTEAKFNSAITRLKTEGLDTSKVVWLPFDLSDPRKAKESAKWLLERENRLDILINNAAKILGPYAQTSDGLSDSMVINHMSPYLFTKTLLPLLESTARQPGSDVRIVNVSSVAHRWVPNPRYDSLEAFNNNFADTWKPKTNLYGYTKLANVLWTKELQRSFDRANIPILAMTVHPGNVMSEGNVKLFTSLMFGTIINWVFSLFFISPFDGGYTPAFAAASRVIAEDRRKYAGAYIVPFGVIEEASEDARREDLAKDLLATTDAVLKQYDYA.

A helical membrane pass occupies residues 19 to 39; sequence KVAVVTGANSGIGLYILFHVA. Positions 30, 78, 105, and 136 each coordinate NADP(+). An N-linked (GlcNAc...) asparagine glycan is attached at asparagine 157. Serine 159 (proton donor) is an active-site residue. NADP(+) contacts are provided by tyrosine 192, lysine 196, valine 227, and serine 229. Residue tyrosine 192 is the Proton acceptor of the active site. Catalysis depends on lysine 196, which acts as the Lowers pKa of active site Tyr. A helical membrane pass occupies residues 235–255; sequence LFTSLMFGTIINWVFSLFFIS.

This sequence belongs to the short-chain dehydrogenases/reductases (SDR) family.

The protein localises to the membrane. It functions in the pathway secondary metabolite biosynthesis. Its function is as follows. Short-chain dehydrogenase/reductase, part of the gene cluster that mediates the biosynthesis of melleolides, a range of antifungal and phytotoxic polyketide derivatives composed of an orsellinic acid (OA) moiety esterified to various sesquiterpene alcohols. The first step in melleolides biosynthesis is performed by the delta(6)-protoilludene synthase PRO1 which catalyzes the cyclization of farnesyl diphosphate to protoilludene. The orsellinic acid synthase armB produces OA by condensing acetyl-CoA with 3 malonyl-CoA units in a three-round chain elongation reaction folowed by a C2-C7 ring closure. ArmB further catalyzes the trans-esterification of OA to the various sesquiterpene alcohols resulting from the hydroxylation of protoilludene. The melleolides cluster also includes 5 cytochrome P450 monooxygenases, 4 NAD(+)-dependent oxidoreductases, one flavin-dependent oxidoreductase, and one O-methyltransferase. The cytochrome P450 monooxygenases may be involved in protoilludene hydroxylation to elaborate melleolides with multiple alcohol groups, such as melleolide D, which carries alcohol functionalities at C-4, C-5, C-10, and C-13. The role of the NAD(+)-dependent enzymes remains unknown. Numerous melleolides, including arnamial, show 5'-O-methylation of the aromatic moiety which may be catalyzed by the methyltransferase encoded in the cluster. The flavin-dependent oxidoreductase might represent the dehydrogenase yielding the aldehyde in position 1 of arnamial and other melleolides. Finally, several halogenase localized outside of the cluster, are able to catalyze the transfer of a single chlorine atom to the melleolide backbone, resulting in a 6'-chloromelleolide product. This Armillaria gallica (Bulbous honey fungus) protein is Short-chain dehydrogenase/reductase ARMGADRAFT_1169971.